A 363-amino-acid chain; its full sequence is Holliday junction branch migration complex subunit RuvB (363 aa).

A disordered region spans residues Met-1–Arg-44. The tract at residues Pro-13–Tyr-204 is large ATPase domain (RuvB-L). Positions 43, 44, 85, 88, 89, 90, 194, 204, and 241 each coordinate ATP. Thr-89 is a binding site for Mg(2+). Positions Glu-205–Asn-275 are small ATPAse domain (RuvB-S). Residues Ala-278–Pro-363 are head domain (RuvB-H). The DNA site is built by Arg-333 and Arg-338.

The protein belongs to the RuvB family. Homohexamer. Forms an RuvA(8)-RuvB(12)-Holliday junction (HJ) complex. HJ DNA is sandwiched between 2 RuvA tetramers; dsDNA enters through RuvA and exits via RuvB. An RuvB hexamer assembles on each DNA strand where it exits the tetramer. Each RuvB hexamer is contacted by two RuvA subunits (via domain III) on 2 adjacent RuvB subunits; this complex drives branch migration. In the full resolvosome a probable DNA-RuvA(4)-RuvB(12)-RuvC(2) complex forms which resolves the HJ.

The protein resides in the cytoplasm. It carries out the reaction ATP + H2O = ADP + phosphate + H(+). Its function is as follows. The RuvA-RuvB-RuvC complex processes Holliday junction (HJ) DNA during genetic recombination and DNA repair, while the RuvA-RuvB complex plays an important role in the rescue of blocked DNA replication forks via replication fork reversal (RFR). RuvA specifically binds to HJ cruciform DNA, conferring on it an open structure. The RuvB hexamer acts as an ATP-dependent pump, pulling dsDNA into and through the RuvAB complex. RuvB forms 2 homohexamers on either side of HJ DNA bound by 1 or 2 RuvA tetramers; 4 subunits per hexamer contact DNA at a time. Coordinated motions by a converter formed by DNA-disengaged RuvB subunits stimulates ATP hydrolysis and nucleotide exchange. Immobilization of the converter enables RuvB to convert the ATP-contained energy into a lever motion, pulling 2 nucleotides of DNA out of the RuvA tetramer per ATP hydrolyzed, thus driving DNA branch migration. The RuvB motors rotate together with the DNA substrate, which together with the progressing nucleotide cycle form the mechanistic basis for DNA recombination by continuous HJ branch migration. Branch migration allows RuvC to scan DNA until it finds its consensus sequence, where it cleaves and resolves cruciform DNA. The chain is Holliday junction branch migration complex subunit RuvB from Picosynechococcus sp. (strain ATCC 27264 / PCC 7002 / PR-6) (Agmenellum quadruplicatum).